The following is a 594-amino-acid chain: Keratin, type II cytoskeletal 2 oral (594 aa).

Positions 1–164 (MSRQACKKSF…DPQIGQVKAQ (164 aa)) are head. Omega-N-methylarginine is present on residues Arg-85 and Arg-104. The interval 165-200 (EREQIKTLNNKFASFIDKVRFLEQQNKVLETKWELL) is coil 1A. The 316-residue stretch at 165–480 (EREQIKTLNN…KLLEGEECRL (316 aa)) folds into the IF rod domain. Positions 201–221 (QQQTIRSGSGPQNLEPFFESY) are linker 1. The coil 1B stretch occupies residues 222-313 (ISCLRKQLDS…TLYDMELSQI (92 aa)). The segment at 314–337 (QSHVSDTSVVLSMDNNRCLDLDSI) is linker 12. The segment at 338 to 476 (IAEVKAQYED…ATYRKLLEGE (139 aa)) is coil 2. The segment at 477-594 (ECRLSGEFQN…TTSSSQQRSK (118 aa)) is tail. Residues 497 to 594 (TSTSSSGSFR…TTSSSQQRSK (98 aa)) form a disordered region. Residues 506–522 (RGTGGSNYGGDSSGRSG) show a composition bias toward gly residues. Residues 523–551 (GSSSSSSRGSSSRGSSGSRLGSGGSISVS) show a composition bias toward low complexity. Arg-541 is modified (omega-N-methylarginine). The span at 552 to 564 (QQRMGFNSGGSQT) shows a compositional bias: polar residues. Residues 565-594 (SVGSSYKSGRGGSSSVQFSQTTSSSQQRSK) show a composition bias toward low complexity.

Belongs to the intermediate filament family. As to quaternary structure, heterotetramer of two type I and two type II keratins.

In terms of biological role, probably contributes to terminal cornification. In Mus musculus (Mouse), this protein is Keratin, type II cytoskeletal 2 oral.